Consider the following 72-residue polypeptide: Translation initiation factor IF-1 (72 aa).

The region spanning 1–72 (MSKEDAIEVM…TRGRIVYRYK (72 aa)) is the S1-like domain.

This sequence belongs to the IF-1 family. As to quaternary structure, component of the 30S ribosomal translation pre-initiation complex which assembles on the 30S ribosome in the order IF-2 and IF-3, IF-1 and N-formylmethionyl-tRNA(fMet); mRNA recruitment can occur at any time during PIC assembly.

It is found in the cytoplasm. Its function is as follows. One of the essential components for the initiation of protein synthesis. Stabilizes the binding of IF-2 and IF-3 on the 30S subunit to which N-formylmethionyl-tRNA(fMet) subsequently binds. Helps modulate mRNA selection, yielding the 30S pre-initiation complex (PIC). Upon addition of the 50S ribosomal subunit IF-1, IF-2 and IF-3 are released leaving the mature 70S translation initiation complex. This chain is Translation initiation factor IF-1, found in Koribacter versatilis (strain Ellin345).